The following is a 148-amino-acid chain: Nucleoside diphosphate kinase (148 aa).

ATP is bound by residues Lys9, Phe57, Arg85, Thr91, Arg102, and Asn112. His115 functions as the Pros-phosphohistidine intermediate in the catalytic mechanism.

The protein belongs to the NDK family. Mg(2+) is required as a cofactor.

It catalyses the reaction a 2'-deoxyribonucleoside 5'-diphosphate + ATP = a 2'-deoxyribonucleoside 5'-triphosphate + ADP. The catalysed reaction is a ribonucleoside 5'-diphosphate + ATP = a ribonucleoside 5'-triphosphate + ADP. Functionally, major role in the synthesis of nucleoside triphosphates other than ATP. The ATP gamma phosphate is transferred to the NDP beta phosphate via a ping-pong mechanism, using a phosphorylated active-site intermediate. The sequence is that of Nucleoside diphosphate kinase from Helianthus annuus (Common sunflower).